The following is a 456-amino-acid chain: Dihydroorotase (456 aa).

Residues histidine 60 and histidine 62 each coordinate Zn(2+). Substrate contacts are provided by residues 62–64 (HFR) and asparagine 94. Residues glutamate 146, histidine 180, histidine 234, and aspartate 313 each contribute to the Zn(2+) site. Aspartate 313 is a catalytic residue. Residue histidine 317 participates in substrate binding.

The protein belongs to the metallo-dependent hydrolases superfamily. DHOase family. Class I DHOase subfamily. It depends on Zn(2+) as a cofactor.

It carries out the reaction (S)-dihydroorotate + H2O = N-carbamoyl-L-aspartate + H(+). Its pathway is pyrimidine metabolism; UMP biosynthesis via de novo pathway; (S)-dihydroorotate from bicarbonate: step 3/3. Catalyzes the reversible cyclization of carbamoyl aspartate to dihydroorotate. The chain is Dihydroorotase from Methanosarcina mazei (strain ATCC BAA-159 / DSM 3647 / Goe1 / Go1 / JCM 11833 / OCM 88) (Methanosarcina frisia).